Here is a 1295-residue protein sequence, read N- to C-terminus: DNA-directed RNA polymerase subunit beta' (1295 aa).

Zn(2+) is bound by residues C66, C68, C81, and C84. Positions 562, 564, and 566 each coordinate Mg(2+). C901, C975, C982, and C985 together coordinate Zn(2+).

The protein belongs to the RNA polymerase beta' chain family. The RNAP catalytic core consists of 2 alpha, 1 beta, 1 beta' and 1 omega subunit. When a sigma factor is associated with the core the holoenzyme is formed, which can initiate transcription. Requires Mg(2+) as cofactor. Zn(2+) is required as a cofactor.

It carries out the reaction RNA(n) + a ribonucleoside 5'-triphosphate = RNA(n+1) + diphosphate. In terms of biological role, DNA-dependent RNA polymerase catalyzes the transcription of DNA into RNA using the four ribonucleoside triphosphates as substrates. The polypeptide is DNA-directed RNA polymerase subunit beta' (Rubrobacter xylanophilus (strain DSM 9941 / JCM 11954 / NBRC 16129 / PRD-1)).